Here is a 145-residue protein sequence, read N- to C-terminus: Methyl-coenzyme M reductase I operon protein D (145 aa).

As to quaternary structure, MCR is composed of three subunits: alpha, beta, and gamma. The function of proteins C and D is not known.

The chain is Methyl-coenzyme M reductase I operon protein D (mcrD) from Methanothermobacter thermautotrophicus (strain ATCC 29096 / DSM 1053 / JCM 10044 / NBRC 100330 / Delta H) (Methanobacterium thermoautotrophicum).